A 178-amino-acid chain; its full sequence is MSELTTLARPYAVAVFKAAKEAGNIQEWADMLEFLKQVMADPLMQRAASDPKAGKDRFIAKFLDLCKGHVIPEGENFIRLLASNGRLGLVGTIADMFAEFRAEEEGYVDVDVITAYPLEESETTNLNALVEKWMSRKGRLHVTVDESLIAGVVLRAGGRVVDASVHGQLQRLAKRLSN.

The protein belongs to the ATPase delta chain family. As to quaternary structure, F-type ATPases have 2 components, F(1) - the catalytic core - and F(0) - the membrane proton channel. F(1) has five subunits: alpha(3), beta(3), gamma(1), delta(1), epsilon(1). F(0) has three main subunits: a(1), b(2) and c(10-14). The alpha and beta chains form an alternating ring which encloses part of the gamma chain. F(1) is attached to F(0) by a central stalk formed by the gamma and epsilon chains, while a peripheral stalk is formed by the delta and b chains.

Its subcellular location is the cell inner membrane. F(1)F(0) ATP synthase produces ATP from ADP in the presence of a proton or sodium gradient. F-type ATPases consist of two structural domains, F(1) containing the extramembraneous catalytic core and F(0) containing the membrane proton channel, linked together by a central stalk and a peripheral stalk. During catalysis, ATP synthesis in the catalytic domain of F(1) is coupled via a rotary mechanism of the central stalk subunits to proton translocation. In terms of biological role, this protein is part of the stalk that links CF(0) to CF(1). It either transmits conformational changes from CF(0) to CF(1) or is implicated in proton conduction. This is ATP synthase subunit delta from Methylococcus capsulatus (strain ATCC 33009 / NCIMB 11132 / Bath).